Consider the following 252-residue polypeptide: Oncostatin-M (252 aa).

An N-terminal signal peptide occupies residues 1–25 (MGVLLTQRTLLSLVLALLFPSMASM). Intrachain disulfides connect cysteine 31/cysteine 152 and cysteine 74/cysteine 192. Residue asparagine 100 is glycosylated (N-linked (GlcNAc...) asparagine). Disordered stretches follow at residues 162-184 (TAEP…ASDA) and 213-252 (GESP…QLPR). Asparagine 217 is a glycosylation site (N-linked (GlcNAc...) asparagine). Over residues 218-245 (RSRRHSPHQALRKGVRRTRPSRKGKRLM) the composition is skewed to basic residues. The propeptide occupies 222 to 252 (HSPHQALRKGVRRTRPSRKGKRLMTRGQLPR).

This sequence belongs to the LIF/OSM family. In terms of processing, propeptide processing is not important for receptor binding activity but may be important growth-inhibitory activity.

The protein localises to the secreted. In terms of biological role, growth regulator. Inhibits the proliferation of a number of tumor cell lines. Stimulates proliferation of AIDS-KS cells. It regulates cytokine production, including IL-6, G-CSF and GM-CSF from endothelial cells. Uses both type I OSM receptor (heterodimers composed of LIFR and IL6ST) and type II OSM receptor (heterodimers composed of OSMR and IL6ST). Involved in the maturation of fetal hepatocytes, thereby promoting liver development and regeneration. This chain is Oncostatin-M (OSM), found in Homo sapiens (Human).